The primary structure comprises 122 residues: Large ribosomal subunit protein bL12 (122 aa).

It belongs to the bacterial ribosomal protein bL12 family. Homodimer. Part of the ribosomal stalk of the 50S ribosomal subunit. Forms a multimeric L10(L12)X complex, where L10 forms an elongated spine to which 2 to 4 L12 dimers bind in a sequential fashion. Binds GTP-bound translation factors.

Its function is as follows. Forms part of the ribosomal stalk which helps the ribosome interact with GTP-bound translation factors. Is thus essential for accurate translation. The chain is Large ribosomal subunit protein bL12 from Latilactobacillus sakei subsp. sakei (strain 23K) (Lactobacillus sakei subsp. sakei).